The chain runs to 122 residues: Small ribosomal subunit protein uS13 (122 aa).

Residues 95-122 (SLPCRGQRTSTNARTRKGPKRAAVKKKK) are disordered. The span at 108–122 (RTRKGPKRAAVKKKK) shows a compositional bias: basic residues.

Belongs to the universal ribosomal protein uS13 family. Part of the 30S ribosomal subunit. Forms a loose heterodimer with protein S19. Forms two bridges to the 50S subunit in the 70S ribosome.

In terms of biological role, located at the top of the head of the 30S subunit, it contacts several helices of the 16S rRNA. In the 70S ribosome it contacts the 23S rRNA (bridge B1a) and protein L5 of the 50S subunit (bridge B1b), connecting the 2 subunits; these bridges are implicated in subunit movement. Contacts the tRNAs in the A and P-sites. The chain is Small ribosomal subunit protein uS13 from Desulforapulum autotrophicum (strain ATCC 43914 / DSM 3382 / VKM B-1955 / HRM2) (Desulfobacterium autotrophicum).